The chain runs to 348 residues: Protein disulfide isomerase CRELD2 (348 aa).

An N-terminal signal peptide occupies residues 1–22 (MHLPPAAAVGLLLLLLPPPARV). Positions 30-33 (CQRC) match the CXXC motif. Disulfide bonds link cysteine 30/cysteine 33, cysteine 139/cysteine 153, cysteine 147/cysteine 165, and cysteine 167/cysteine 176. In terms of domain architecture, EGF-like 1 spans 135-177 (DCQECQGGSQRPCSGNGHCDGDGSRQGDGSCQCHVGYKGPLCI). The FU 1 repeat unit spans residues 192–239 (HSFCTACDESCKTCSGPTNKGCVECEVGWTRVEDACVDVDECAAETPP). Asparagine 250 carries N-linked (GlcNAc...) asparagine glycosylation. One copy of the FU 2 repeat lies at 252 to 299 (SYTCEECDSTCVGCTGKGPANCKECISGYSKQKGECADIDECSLETKV). Positions 262–265 (CVGC) match the CXXC motif. 4 cysteine pairs are disulfide-bonded: cysteine 262–cysteine 265, cysteine 293–cysteine 307, cysteine 300–cysteine 316, and cysteine 318–cysteine 328. Residues 289 to 329 (DIDECSLETKVCKKENENCYNTPGSFVCVCPEGFEEDRRCL) enclose the EGF-like 2; calcium-binding domain.

Belongs to the CRELD family. In terms of assembly, interacts with CHRNA4. Component of a complex containing at least CRELD2, MANF, MATN3 and PDIA4.

Its subcellular location is the endoplasmic reticulum. It catalyses the reaction Catalyzes the rearrangement of -S-S- bonds in proteins.. In terms of biological role, protein disulfide isomerase. Might play a role in the unfolded protein response. May regulate transport of alpha4-beta2 neuronal acetylcholine receptor. The chain is Protein disulfide isomerase CRELD2 (CRELD2) from Cricetulus griseus (Chinese hamster).